A 92-amino-acid polypeptide reads, in one-letter code: Small ribosomal subunit protein uS19c (92 aa).

This sequence belongs to the universal ribosomal protein uS19 family.

Its subcellular location is the plastid. It localises to the chloroplast. Its function is as follows. Protein S19 forms a complex with S13 that binds strongly to the 16S ribosomal RNA. This Thalassiosira pseudonana (Marine diatom) protein is Small ribosomal subunit protein uS19c.